We begin with the raw amino-acid sequence, 190 residues long: Large ribosomal subunit protein uL6 (190 aa).

Belongs to the universal ribosomal protein uL6 family.

This chain is Large ribosomal subunit protein uL6 (RpL9), found in Drosophila melanogaster (Fruit fly).